Consider the following 197-residue polypeptide: ATP-dependent Clp protease proteolytic subunit 2 (197 aa).

Ser-96 functions as the Nucleophile in the catalytic mechanism. The active site involves His-121.

It belongs to the peptidase S14 family. As to quaternary structure, fourteen ClpP subunits assemble into 2 heptameric rings which stack back to back to give a disk-like structure with a central cavity, resembling the structure of eukaryotic proteasomes.

Its subcellular location is the cytoplasm. It catalyses the reaction Hydrolysis of proteins to small peptides in the presence of ATP and magnesium. alpha-casein is the usual test substrate. In the absence of ATP, only oligopeptides shorter than five residues are hydrolyzed (such as succinyl-Leu-Tyr-|-NHMec, and Leu-Tyr-Leu-|-Tyr-Trp, in which cleavage of the -Tyr-|-Leu- and -Tyr-|-Trp bonds also occurs).. Cleaves peptides in various proteins in a process that requires ATP hydrolysis. Has a chymotrypsin-like activity. Plays a major role in the degradation of misfolded proteins. This is ATP-dependent Clp protease proteolytic subunit 2 from Synechococcus sp. (strain CC9605).